Consider the following 346-residue polypeptide: MLVLGIESSCDETGLALYDTERGLLAHALHSQIAMHREYGGVVPELASRDHIRRALPLLEEVLAASGARRDDIDAIAFTQGPGLAGALLVGASIANALAFAWDKPTIGIHHLEGHLLSPLLVAEPPPFPFVALLVSGGHTQLMRVSDVGVYETLGETLDDAAGEAFDKTAKLLGLGYPGGPEVSRLAEAGTPGAVVLPRPMLHSVDLDFSFSGLKTAVLTQMKKLEAAHAGGAVLERAKADLARGFVDAAVDVLVAKSLAALKATRLKRLVVAGGVGANRQLRAALSAAAQKRGFDVHYPDLALCTDNGAMIALAGALRLARWPSQASRDYAFTVKPRWDLASLAR.

2 residues coordinate Fe cation: histidine 111 and histidine 115. Residues 134 to 138 (LVSGG), aspartate 167, glycine 180, and asparagine 279 contribute to the substrate site. Residue aspartate 307 participates in Fe cation binding.

It belongs to the KAE1 / TsaD family. The cofactor is Fe(2+).

Its subcellular location is the cytoplasm. It catalyses the reaction L-threonylcarbamoyladenylate + adenosine(37) in tRNA = N(6)-L-threonylcarbamoyladenosine(37) in tRNA + AMP + H(+). Its function is as follows. Required for the formation of a threonylcarbamoyl group on adenosine at position 37 (t(6)A37) in tRNAs that read codons beginning with adenine. Is involved in the transfer of the threonylcarbamoyl moiety of threonylcarbamoyl-AMP (TC-AMP) to the N6 group of A37, together with TsaE and TsaB. TsaD likely plays a direct catalytic role in this reaction. In Burkholderia pseudomallei (strain K96243), this protein is tRNA N6-adenosine threonylcarbamoyltransferase.